The primary structure comprises 860 residues: Leucine--tRNA ligase (860 aa).

The short motif at 42-52 (PYPSGRLHMGH) is the 'HIGH' region element. Residues 619–623 (KMSKS) carry the 'KMSKS' region motif. K622 is a binding site for ATP.

The protein belongs to the class-I aminoacyl-tRNA synthetase family.

The protein localises to the cytoplasm. The enzyme catalyses tRNA(Leu) + L-leucine + ATP = L-leucyl-tRNA(Leu) + AMP + diphosphate. This is Leucine--tRNA ligase from Salmonella paratyphi B (strain ATCC BAA-1250 / SPB7).